Here is a 67-residue protein sequence, read N- to C-terminus: MDNRLLEILVCPLCKGKLEYDRAAQELICHADKLAYPIRDGIPVMLADEARQSVPGRVIDPAAPRTE.

Belongs to the UPF0434 family.

The protein is UPF0434 protein Reut_A0592 of Cupriavidus pinatubonensis (strain JMP 134 / LMG 1197) (Cupriavidus necator (strain JMP 134)).